The primary structure comprises 384 residues: Probable RNA 3'-terminal phosphate cyclase-like protein (384 aa).

It belongs to the RNA 3'-terminal cyclase family. Type 2 subfamily. As to quaternary structure, part of the small subunit (SSU) processome, composed of more than 70 proteins and the RNA chaperone small nucleolar RNA (snoRNA) U3.

The protein resides in the nucleus. It is found in the nucleolus. Functionally, part of the small subunit (SSU) processome, first precursor of the small eukaryotic ribosomal subunit. During the assembly of the SSU processome in the nucleolus, many ribosome biogenesis factors, an RNA chaperone and ribosomal proteins associate with the nascent pre-rRNA and work in concert to generate RNA folding, modifications, rearrangements and cleavage as well as targeted degradation of pre-ribosomal RNA by the RNA exosome. Does not have cyclase activity. The protein is Probable RNA 3'-terminal phosphate cyclase-like protein (Rtc1) of Drosophila melanogaster (Fruit fly).